A 777-amino-acid chain; its full sequence is Endonuclease MutS2 (777 aa).

Position 328-335 (328-335 (GPNTGGKT)) interacts with ATP. In terms of domain architecture, Smr spans 702 to 777 (LDLRGKRYEE…GSGCTIATLG (76 aa)).

This sequence belongs to the DNA mismatch repair MutS family. MutS2 subfamily. As to quaternary structure, homodimer. Binds to stalled ribosomes, contacting rRNA.

Functionally, endonuclease that is involved in the suppression of homologous recombination and thus may have a key role in the control of bacterial genetic diversity. In terms of biological role, acts as a ribosome collision sensor, splitting the ribosome into its 2 subunits. Detects stalled/collided 70S ribosomes which it binds and splits by an ATP-hydrolysis driven conformational change. Acts upstream of the ribosome quality control system (RQC), a ribosome-associated complex that mediates the extraction of incompletely synthesized nascent chains from stalled ribosomes and their subsequent degradation. Probably generates substrates for RQC. This is Endonuclease MutS2 from Streptococcus uberis (strain ATCC BAA-854 / 0140J).